A 271-amino-acid polypeptide reads, in one-letter code: tRNA pseudouridine synthase A (271 aa).

Asp-52 (nucleophile) is an active-site residue. Tyr-110 lines the substrate pocket.

The protein belongs to the tRNA pseudouridine synthase TruA family. As to quaternary structure, homodimer.

The enzyme catalyses uridine(38/39/40) in tRNA = pseudouridine(38/39/40) in tRNA. Formation of pseudouridine at positions 38, 39 and 40 in the anticodon stem and loop of transfer RNAs. The polypeptide is tRNA pseudouridine synthase A (Maridesulfovibrio salexigens (strain ATCC 14822 / DSM 2638 / NCIMB 8403 / VKM B-1763) (Desulfovibrio salexigens)).